Reading from the N-terminus, the 148-residue chain is Small ribosomal subunit protein eS6 (148 aa).

It belongs to the eukaryotic ribosomal protein eS6 family.

The polypeptide is Small ribosomal subunit protein eS6 (Pyrobaculum arsenaticum (strain DSM 13514 / JCM 11321 / PZ6)).